We begin with the raw amino-acid sequence, 511 residues long: Cytochrome P450 705A5 (511 aa).

Residues 12-30 (CFIFLLLCLFSRLSYDLFF) traverse the membrane as a helical segment. C454 contacts heme.

It belongs to the cytochrome P450 family. Heme is required as a cofactor. Expressed primarily in the root epidermis.

The protein resides in the membrane. Converts thalian-diol to a desaturated thalian-diol. In Arabidopsis thaliana (Mouse-ear cress), this protein is Cytochrome P450 705A5 (CYP705A5).